Reading from the N-terminus, the 317-residue chain is Melanocyte-stimulating hormone receptor (317 aa).

At 1–37 (MPALGSQRRLLGSLNCTPPATLPFTLAPNRTGPQCLE) the chain is on the extracellular side. The N-linked (GlcNAc...) asparagine glycan is linked to Asn29. A helical membrane pass occupies residues 38-63 (VSIPDGLFLSLGLVSLVENVLVVAAI). At 64 to 72 (AKNRNLHSP) the chain is on the cytoplasmic side. The chain crosses the membrane as a helical span at residues 73–93 (MYYFICCLAVSDLLVSVSNVL). The Extracellular portion of the chain corresponds to 94-118 (ETAVMLLLEAGVLATQAAVVQQLDN). The chain crosses the membrane as a helical span at residues 119-140 (VIDVLICGSMVSSLCFLGAIAV). Residues 141-163 (DRYISIFYALRYHSVVTLPRAWR) are Cytoplasmic-facing. The chain crosses the membrane as a helical span at residues 164–183 (IIAAIWVASILTSLLFITYY). Topologically, residues 184-191 (NHKVILLC) are extracellular. Residues 192–211 (LVGLFIAMLALMAVLYVHML) traverse the membrane as a helical segment. Topologically, residues 212 to 240 (ARACQHARGIARLQKRQRPIHQGFGLKGA) are cytoplasmic. A helical transmembrane segment spans residues 241–266 (ATLTILLGVFFLCWGPFFLHLSLIVL). Over 267 to 279 (CPQHPTCGCIFKN) the chain is Extracellular. The chain crosses the membrane as a helical span at residues 280 to 300 (FNLFLALIICNAIVDPLIYAF). The Cytoplasmic portion of the chain corresponds to 301-317 (RSQELRKTLQEVLQCSW). Cys315 is lipidated: S-palmitoyl cysteine.

It belongs to the G-protein coupled receptor 1 family. As to quaternary structure, interacts with MGRN1, but does not undergo MGRN1-mediated ubiquitination; this interaction competes with GNAS-binding and thus inhibits agonist-induced cAMP production. Interacts with OPN3; the interaction results in a decrease in MC1R-mediated cAMP signaling and ultimately a decrease in melanin production in melanocytes. Highly expressed in the testis.

It is found in the cell membrane. Functionally, receptor for MSH (alpha, beta) and ACTH. Does not seem to be active with gamma-MSH. The activity of this receptor is mediated by G proteins which activate adenylate cyclase. Mediates melanogenesis, the production of eumelanin (black/brown) and phaeomelanin (red/yellow), via regulation of cAMP signaling in melanocytes. This chain is Melanocyte-stimulating hormone receptor (MC1R), found in Bos taurus (Bovine).